Reading from the N-terminus, the 156-residue chain is Small ribosomal subunit protein uS7 (156 aa).

It belongs to the universal ribosomal protein uS7 family. As to quaternary structure, part of the 30S ribosomal subunit. Contacts proteins S9 and S11.

Functionally, one of the primary rRNA binding proteins, it binds directly to 16S rRNA where it nucleates assembly of the head domain of the 30S subunit. Is located at the subunit interface close to the decoding center, probably blocks exit of the E-site tRNA. This chain is Small ribosomal subunit protein uS7, found in Deinococcus radiodurans (strain ATCC 13939 / DSM 20539 / JCM 16871 / CCUG 27074 / LMG 4051 / NBRC 15346 / NCIMB 9279 / VKM B-1422 / R1).